Consider the following 177-residue polypeptide: Probable nicotinate-nucleotide adenylyltransferase (177 aa).

Belongs to the NadD family.

It carries out the reaction nicotinate beta-D-ribonucleotide + ATP + H(+) = deamido-NAD(+) + diphosphate. It functions in the pathway cofactor biosynthesis; NAD(+) biosynthesis; deamido-NAD(+) from nicotinate D-ribonucleotide: step 1/1. Its function is as follows. Catalyzes the reversible adenylation of nicotinate mononucleotide (NaMN) to nicotinic acid adenine dinucleotide (NaAD). The polypeptide is Probable nicotinate-nucleotide adenylyltransferase (Nitratiruptor sp. (strain SB155-2)).